We begin with the raw amino-acid sequence, 977 residues long: Protein bicaudal C homolog 1 (977 aa).

Residues 1-43 (MASQSEPGYLAAAQSDPGSNSERSTDSPVAGSEDDLVAAAPLL) form a disordered region. S27, S32, and S45 each carry phosphoserine. KH domains follow at residues 134-201 (RVTL…RARI) and 286-350 (PVST…RQYL). At K400 the chain carries N6-acetyllysine. A compositionally biased stretch (polar residues) spans 590-621 (SLGEKVLSSNHGDPSMQTAGPEQASPKSNSVE). Disordered regions lie at residues 590 to 622 (SLGEKVLSSNHGDPSMQTAGPEQASPKSNSVEG), 667 to 702 (GTKNSHLHGTDRLLSDPELSATESPLADKKAPGSER), and 794 to 848 (EGSS…KSRE). S614 and S681 each carry phosphoserine. Basic and acidic residues predominate over residues 692–702 (LADKKAPGSER). Residues 794–803 (EGSSLSLSRS) are compositionally biased toward low complexity. The 64-residue stretch at 875 to 938 (FKGSDLPELF…LLAISELSKN (64 aa)) folds into the SAM domain.

Belongs to the BicC family. Interacts (via KH domains) with ANKS6 (via SAM domain) in an RNA-dependent manner. Interacts with ANKS3. In the adult, predominantly expressed in heart and kidney. In 8 week old mice, expressed in growing primary oocytes and in the stromal cells of the theca.

It is found in the cytoplasm. Putative RNA-binding protein. May be involved in regulating gene expression during embryonic development. The polypeptide is Protein bicaudal C homolog 1 (Bicc1) (Mus musculus (Mouse)).